Reading from the N-terminus, the 259-residue chain is Putative zinc metalloprotease Rip2 (259 aa).

A run of 2 helical transmembrane segments spans residues 14 to 34 (PIFL…WLAG) and 39 to 59 (PLAY…SLCL). A Zn(2+)-binding site is contributed by His60. Residue Glu61 is part of the active site. His64 serves as a coordination point for Zn(2+). Transmembrane regions (helical) follow at residues 97–117 (GLPM…AVYV), 128–148 (TLVS…LLAA), 156–176 (IHAV…TALV), and 215–235 (LVLF…YWLF).

It belongs to the peptidase M50B family. The cofactor is Zn(2+).

It localises to the cell membrane. The sequence is that of Putative zinc metalloprotease Rip2 (rip2) from Mycobacterium tuberculosis (strain ATCC 35801 / TMC 107 / Erdman).